A 196-amino-acid chain; its full sequence is Probable splicing factor, arginine/serine-rich 4 (196 aa).

Residues 19-97 (TSLKIDNLSY…RELRVTLAKY (79 aa)) form the RRM domain. Over residues 91 to 106 (RVTLAKYDRPSDERGG) the composition is skewed to basic and acidic residues. The segment at 91-196 (RVTLAKYDRP…SPSRSRSNSR (106 aa)) is disordered. Residues 112 to 141 (GRRRSRSPRRRSRSPRYSRSRSPRRSRSRT) show a composition bias toward basic residues. 2 stretches are compositionally biased toward basic and acidic residues: residues 145 to 160 (PSRD…DNSR) and 167 to 176 (PPREDGSPKE). Low complexity predominate over residues 184-196 (ASRSPSRSRSNSR).

The protein belongs to the splicing factor SR family. In terms of processing, extensively phosphorylated on serine residues in the RS domain.

It is found in the nucleus. May play a functionally redundant role in embryogenesis. The polypeptide is Probable splicing factor, arginine/serine-rich 4 (rsp-4) (Caenorhabditis elegans).